We begin with the raw amino-acid sequence, 206 residues long: ATP-dependent Clp protease proteolytic subunit (206 aa).

Ser-110 functions as the Nucleophile in the catalytic mechanism. His-135 is an active-site residue.

Belongs to the peptidase S14 family. In terms of assembly, fourteen ClpP subunits assemble into 2 heptameric rings which stack back to back to give a disk-like structure with a central cavity, resembling the structure of eukaryotic proteasomes.

The protein localises to the cytoplasm. The catalysed reaction is Hydrolysis of proteins to small peptides in the presence of ATP and magnesium. alpha-casein is the usual test substrate. In the absence of ATP, only oligopeptides shorter than five residues are hydrolyzed (such as succinyl-Leu-Tyr-|-NHMec, and Leu-Tyr-Leu-|-Tyr-Trp, in which cleavage of the -Tyr-|-Leu- and -Tyr-|-Trp bonds also occurs).. Cleaves peptides in various proteins in a process that requires ATP hydrolysis. Has a chymotrypsin-like activity. Plays a major role in the degradation of misfolded proteins. In Edwardsiella ictaluri (strain 93-146), this protein is ATP-dependent Clp protease proteolytic subunit.